The primary structure comprises 286 residues: 2-hydroxy-6-oxo-6-phenylhexa-2,4-dienoate hydrolase (286 aa).

Substrate is bound by residues Gly-42–Gly-43, Asn-51, Asn-111, Ser-180, and Arg-190. His-265 functions as the Proton acceptor in the catalytic mechanism. A substrate-binding site is contributed by Trp-266.

The protein belongs to the AB hydrolase superfamily. BphD family. As to quaternary structure, homodimer.

It carries out the reaction 2,6-dioxo-6-phenylhexa-3-enoate + H2O = 2-oxopent-4-enoate + benzoate + H(+). It functions in the pathway xenobiotic degradation; biphenyl degradation; 2-hydroxy-2,4-pentadienoate and benzoate from biphenyl: step 4/4. Its function is as follows. Catalyzes an unusual C-C bond hydrolysis of 2-hydroxy-6-oxo-6-phenylhexa-2,4-dienoic acid (HOPDA) to produce benzoic acid and 2-hydroxy-2,4-pentadienoic acid (HPD). In Polaromonas naphthalenivorans (strain CJ2), this protein is 2-hydroxy-6-oxo-6-phenylhexa-2,4-dienoate hydrolase.